Reading from the N-terminus, the 525-residue chain is NGFI-A-binding protein 2 (525 aa).

The disordered stretch occupies residues 1–22; sequence MHRAPSPTAEQPPGGGDSARRT. A Phosphoserine modification is found at Ser6. The tract at residues 35 to 113 is NCD1; sequence ALPRTLGELQ…REWATNPGLF (79 aa). A disordered region spans residues 135–237; the sequence is GTRKGSMSNG…GGTGGGPDRL (103 aa). Residues Ser157, Ser159, Ser162, and Ser171 each carry the phosphoserine modification. Gly residues predominate over residues 212–234; the sequence is AGGGVPEGTGAGGLAAGGTGGGP. The segment at 267–356 is NCD2; that stretch reads LLKLNKKLAR…SRQVARESTY (90 aa). The segment at 353 to 384 is necessary for nuclear localization; the sequence is ESTYLSSLKGSRLHPEELGGPPLKKLKQEVGE. Lys379 participates in a covalent cross-link: Glycyl lysine isopeptide (Lys-Gly) (interchain with G-Cter in SUMO1). Residues 380–416 are disordered; sequence QEVGEQSHPEIQQPPPGPESYVPPYRPSLEEDSASLS. Ser479 is subject to Phosphoserine. A disordered region spans residues 502–525; sequence PGPHPALVEGRRSSVKVEAEASRQ. The segment covering 510 to 525 has biased composition (basic and acidic residues); the sequence is EGRRSSVKVEAEASRQ. Lys517 is covalently cross-linked (Glycyl lysine isopeptide (Lys-Gly) (interchain with G-Cter in SUMO1); alternate). Lys517 participates in a covalent cross-link: Glycyl lysine isopeptide (Lys-Gly) (interchain with G-Cter in SUMO2); alternate.

This sequence belongs to the NAB family. In terms of assembly, homomultimers may associate with EGR1 bound to DNA. Post-translationally, sumoylation by EGR2 represses EGR2 transcriptional activity in hindbrain. As to expression, widely expressed at low levels. Highly expressed in melanoma cell lines.

It is found in the nucleus. Acts as a transcriptional repressor for zinc finger transcription factors EGR1 and EGR2. Isoform 2 lacks repression ability. The polypeptide is NGFI-A-binding protein 2 (NAB2) (Homo sapiens (Human)).